A 271-amino-acid polypeptide reads, in one-letter code: Protein PXR1 (271 aa).

Disordered regions lie at residues 1–26 (MGLAAARNKQRFGLDPRNTTWSNNTS) and 149–233 (KKRP…DSAA). Polar residues predominate over residues 17–26 (RNTTWSNNTS). The G-patch domain maps to 25 to 71 (TSRFGHKHLEKLGWKPGSGLGLVPDSTTSHIKVSIKDDNLGLGAKLK). The span at 165 to 205 (KKTKKVKKEKKVKKVKKEKKEKKEKKDKKEKKVKKEKKEKK) shows a compositional bias: basic residues. Basic and acidic residues predominate over residues 206-230 (EKKLKDKHSKDTNEITRDQMLKPRD).

Belongs to the PINX1 family.

It localises to the nucleus. The protein resides in the nucleolus. Functionally, involved in rRNA-processing at A0, A1 and A2 sites and negatively regulates telomerase. The chain is Protein PXR1 (PXR1) from Kluyveromyces lactis (strain ATCC 8585 / CBS 2359 / DSM 70799 / NBRC 1267 / NRRL Y-1140 / WM37) (Yeast).